The following is a 79-amino-acid chain: Scutelatoxin (79 aa).

Positions 1–21 (MKTLLLTLVVMTIMCLDLGYT) are cleaved as a signal peptide. Intrachain disulfides connect Cys24–Cys41, Cys34–Cys59, Cys63–Cys71, and Cys72–Cys77.

This sequence belongs to the three-finger toxin family. Short-chain subfamily. As to expression, expressed by the venom gland.

It is found in the secreted. The polypeptide is Scutelatoxin (Oxyuranus scutellatus scutellatus (Australian taipan)).